The sequence spans 418 residues: Serpin A3-8 (418 aa).

A signal peptide spans 1–25 (MRAERMSPLLALGLLVSGLCSRVHC). N103, N183, N233, and N268 each carry an N-linked (GlcNAc...) asparagine glycan.

This sequence belongs to the serpin family. As to quaternary structure, homodimer.

The protein resides in the cytoplasmic vesicle. It localises to the secretory vesicle. Its subcellular location is the chromaffin granule. It is found in the secreted. Functionally, serine protease inhibitor. This is Serpin A3-8 from Bos taurus (Bovine).